Reading from the N-terminus, the 689-residue chain is Glycine--tRNA ligase beta subunit (689 aa).

It belongs to the class-II aminoacyl-tRNA synthetase family. In terms of assembly, tetramer of two alpha and two beta subunits.

It is found in the cytoplasm. It catalyses the reaction tRNA(Gly) + glycine + ATP = glycyl-tRNA(Gly) + AMP + diphosphate. The polypeptide is Glycine--tRNA ligase beta subunit (Acinetobacter baumannii (strain ACICU)).